The primary structure comprises 1325 residues: ATP-binding cassette sub-family C member 4 (1325 aa).

An ABC transmembrane type-1 1 domain is found at 92–377 (YLVLGIFTLI…FFPSAIERVS (286 aa)). 7 helical membrane-spanning segments follow: residues 93–113 (LVLG…PIFL), 136–156 (AYAT…HLYF), 207–227 (QVTV…AVTA), 228–248 (LLWM…IILL), 328–348 (SKII…VITA), 351–371 (VFVA…FFPS), and 440–460 (LLAV…AVLG). The 224-residue stretch at 410–633 (VHVQDFTAFW…GIDFGSLLKK (224 aa)) folds into the ABC transporter 1 domain. 445–452 (GPVGAGKS) is an ATP binding site. Phosphothreonine is present on residues Thr-646 and Thr-648. The segment covering 657–667 (SSVWSQQSSRP) has biased composition (low complexity). The segment at 657–688 (SSVWSQQSSRPSLKDGALESQDTENVPVTLSE) is disordered. Residues Ser-664 and Ser-668 each carry the phosphoserine modification. A helical transmembrane segment spans residues 710 to 730 (HWIVFIFLILLNTAAQVAYVL). The ABC transmembrane type-1 2 domain occupies 714-1005 (FIFLILLNTA…CVRQSAEVEN (292 aa)). N-linked (GlcNAc...) asparagine glycosylation is found at Asn-746 and Asn-754. 6 consecutive transmembrane segments (helical) span residues 771–791 (LTVA…YVLV), 836–856 (LPLT…VVSV), 858–878 (VAVI…FIFL), 954–974 (AICA…AKTL), 977–997 (GQVG…QWCV), and 1038–1058 (EGVI…PLVL). The ABC transporter 2 domain maps to 1041–1274 (IIFDNVNFMY…KESLFYKMVQ (234 aa)). An ATP-binding site is contributed by 1075 to 1082 (GRTGAGKS). Positions 1322–1325 (ETAL) match the PDZ-binding motif.

This sequence belongs to the ABC transporter superfamily. ABCC family. Conjugate transporter (TC 3.A.1.208) subfamily. As to quaternary structure, interacts (via PDZ-binding motif) with SNX27 (via PDZ domain); this interaction accelerates MRP4 internalization. Mg(2+) is required as a cofactor. In terms of processing, N-glycosylated; leading to substrate-selective effects on its transport activity. In terms of tissue distribution, widely expressed, with particularly high levels in prostate, but is barely detectable in liver. sinusoidal membrane of hepatocytes.

The protein localises to the basolateral cell membrane. It localises to the apical cell membrane. It carries out the reaction ATP + H2O + xenobioticSide 1 = ADP + phosphate + xenobioticSide 2.. The catalysed reaction is an S-substituted glutathione(in) + ATP + H2O = an S-substituted glutathione(out) + ADP + phosphate + H(+). The enzyme catalyses 17beta-estradiol 17-O-(beta-D-glucuronate)(in) + ATP + H2O = 17beta-estradiol 17-O-(beta-D-glucuronate)(out) + ADP + phosphate + H(+). It catalyses the reaction dehydroepiandrosterone 3-sulfate(in) + ATP + H2O = dehydroepiandrosterone 3-sulfate(out) + ADP + phosphate + H(+). It carries out the reaction leukotriene C4(in) + ATP + H2O = leukotriene C4(out) + ADP + phosphate + H(+). The catalysed reaction is leukotriene B4(in) + ATP + H2O = leukotriene B4(out) + ADP + phosphate + H(+). The enzyme catalyses urate(in) + ATP + H2O = urate(out) + ADP + phosphate + H(+). It catalyses the reaction 3',5'-cyclic GMP(in) + ATP + H2O = 3',5'-cyclic GMP(out) + ADP + phosphate + H(+). It carries out the reaction 3',5'-cyclic AMP(in) + ATP + H2O = 3',5'-cyclic AMP(out) + ADP + phosphate + H(+). The catalysed reaction is prostaglandin E2(in) + ATP + H2O = prostaglandin E2(out) + ADP + phosphate + H(+). The enzyme catalyses prostaglandin E1(in) + ATP + H2O = prostaglandin E1(out) + ADP + phosphate + H(+). It catalyses the reaction glycodeoxycholate(in) + glutathione(in) + ATP + H2O = glycodeoxycholate(out) + glutathione(out) + ADP + phosphate + H(+). It carries out the reaction cholate(in) + glutathione(in) + ATP + H2O = cholate(out) + glutathione(out) + ADP + phosphate + H(+). The catalysed reaction is glycocholate(in) + glutathione(in) + ATP + H2O = glycocholate(out) + glutathione(out) + ADP + phosphate + H(+). The enzyme catalyses taurocholate(in) + glutathione(in) + ATP + H2O = taurocholate(out) + glutathione(out) + ADP + phosphate + H(+). It catalyses the reaction glycochenodeoxycholate(in) + glutathione(in) + ATP + H2O = glycochenodeoxycholate(out) + glutathione(out) + ADP + phosphate + H(+). It carries out the reaction taurochenodeoxycholate(in) + glutathione(in) + ATP + H2O = taurochenodeoxycholate(out) + glutathione(out) + ADP + phosphate + H(+). The catalysed reaction is glycoursodeoxycholate(in) + glutathione(in) + ATP + H2O = glycoursodeoxycholate(out) + glutathione(out) + ADP + phosphate + H(+). The enzyme catalyses tauroursodeoxycholate(in) + glutathione(in) + ATP + H2O = tauroursodeoxycholate(out) + glutathione(out) + ADP + phosphate + H(+). Its activity is regulated as follows. GSH stimulates the transport of MRP4. Urate inhibits methotrexate transport but stimulates cGMP transport. Nonsteroidal anti-inflammatory drugs (NSAIDs) strongly suppress the transport of MRP4 substrates. Its function is as follows. ATP-dependent transporter of the ATP-binding cassette (ABC) family that actively extrudes physiological compounds and xenobiotics from cells. Transports a range of endogenous molecules that have a key role in cellular communication and signaling, including cyclic nucleotides such as cyclic AMP (cAMP) and cyclic GMP (cGMP), bile acids, steroid conjugates, urate, and prostaglandins. Mediates the ATP-dependent efflux of glutathione conjugates such as leukotriene C4 (LTC4) and leukotriene B4 (LTB4) too. The presence of GSH is necessary for the ATP-dependent transport of LTB4, whereas GSH is not required for the transport of LTC4. Mediates the cotransport of bile acids with reduced glutathione (GSH). Transports a wide range of drugs and their metabolites, including anticancer, antiviral and antibiotics molecules. Confers resistance to anticancer agents such as methotrexate. The protein is ATP-binding cassette sub-family C member 4 (ABCC4) of Homo sapiens (Human).